A 509-amino-acid chain; its full sequence is O-acetyltransferase anaAT (509 aa).

The protein belongs to the fumigaclavine B O-acetyltransferase family. In terms of assembly, monomer.

It catalyses the reaction (2R,3S,11R)-aszonalenin + acetyl-CoA = (2R,3S,11R)-acetylaszonalenin + CoA. It functions in the pathway alkaloid biosynthesis. Functionally, O-acetyltransferase; part of the gene cluster that mediates the biosynthesis of the prenylated pyrroloindoline diketopiperazine acetylaszonalenin. The first step in the pathway is the formation of (R)-benzodiazepinedione by condensation of tryptophan and anthranilic acid catalyzed by the non-ribosomal peptide synthetase anaPS. The prenyltransferase anaPT then converts (R)-benzodiazepinedione to aszonalenin in the presence of dimethylallyl diphosphate (DMAPP) via C3-prenylation. The last step in the biosynthesis of acetylaszonalenin via acetylation of aszonalenin at position N1 catalyzed by anaAT. This chain is O-acetyltransferase anaAT, found in Neosartorya fischeri (strain ATCC 1020 / DSM 3700 / CBS 544.65 / FGSC A1164 / JCM 1740 / NRRL 181 / WB 181) (Aspergillus fischerianus).